The following is a 326-amino-acid chain: Homocysteine S-methyltransferase 1 (326 aa).

Positions Leu-9–Leu-323 constitute a Hcy-binding domain. Zn(2+) is bound by residues Cys-241, Cys-308, and Cys-309.

The cofactor is Zn(2+). As to expression, expressed in roots, young leaves, florets and flowers. Not detected in old leaves.

It carries out the reaction S-methyl-L-methionine + L-homocysteine = 2 L-methionine + H(+). Its activity is regulated as follows. Inhibited by L-methionine. Its function is as follows. Catalyzes methyl transfer from S-methylmethionine to homocysteine. The highest preference is for DL-homocysteine &gt;&gt; DL-cysteine. Has no selenocysteine methyltransferase activity. The chain is Homocysteine S-methyltransferase 1 (HMT1) from Brassica oleracea var. italica (Broccoli).